Consider the following 315-residue polypeptide: tRNA dimethylallyltransferase (315 aa).

Residue 10-17 (GPTAVGKT) coordinates ATP. Residue 12–17 (TAVGKT) participates in substrate binding. Residues 35 to 38 (DSMQ) form an interaction with substrate tRNA region.

Belongs to the IPP transferase family. Monomer. It depends on Mg(2+) as a cofactor.

The catalysed reaction is adenosine(37) in tRNA + dimethylallyl diphosphate = N(6)-dimethylallyladenosine(37) in tRNA + diphosphate. Catalyzes the transfer of a dimethylallyl group onto the adenine at position 37 in tRNAs that read codons beginning with uridine, leading to the formation of N6-(dimethylallyl)adenosine (i(6)A). In Geobacillus kaustophilus (strain HTA426), this protein is tRNA dimethylallyltransferase.